A 393-amino-acid chain; its full sequence is Iripin-3 (393 aa).

The N-terminal stretch at 1-16 (MKVITAFLSVFVLCSA) is a signal peptide. N-linked (GlcNAc...) asparagine glycosylation is found at N104 and N265.

This sequence belongs to the serpin family. Interacts with human KLKB1. Interacts with human ST14. Interacts with human F2 (thrombin). As to expression, saliva (at protein level). Expressed in salivary gland. Expressed in ovary during blood feeding.

It localises to the secreted. Serine protease inhibitor that modulates blood feeding of ticks on vertebrate species. Moderately inhibits host plasma kallikrein (KLKB1), matriptase (ST14), trypsin, plasmin (PLG), thrombin (F2) and coagulation factor VIIa (F7). Slightly inhibits host alpha-chymotrypsin, tPA/tissue-type plasminogen activator (PLAT), uPA/urokinase-type plasminogen activator (PLAU) and coagulation factor XIIa (F12). Slightly inhibits the extrinsic pathway while not affecting the intrinsic and common pathways of host blood coagulation. Decreases synthesis and secretion of IL6 by mouse bone marrow-derived macrophages. Decreases viability of mouse B- and T-cells. Decreases proliferation of mouse CD4+ T-cells in response to stimulation. Inhibits Th1 immune responses in mouse cells. Promotes differentiation of mouse regulatory T-cells. This Ixodes ricinus (Common tick) protein is Iripin-3.